Consider the following 383-residue polypeptide: Retrovirus-related Pol polyprotein from type-1 retrotransposable element R1 3 (383 aa).

Residues 1-88 enclose the Reverse transcriptase domain; it reads VDAFADDLLL…DRVRYLGVNV (88 aa). The tract at residues 229-383 is nucleic acid-binding endonuclease; it reads LSLHECRELV…VQRMRENEES (155 aa).

The catalysed reaction is DNA(n) + a 2'-deoxyribonucleoside 5'-triphosphate = DNA(n+1) + diphosphate. The sequence is that of Retrovirus-related Pol polyprotein from type-1 retrotransposable element R1 3 from Nasonia vitripennis (Parasitic wasp).